The following is a 459-amino-acid chain: Chromosomal replication initiator protein DnaA (459 aa).

The segment at 1–74 is domain I, interacts with DnaA modulators; the sequence is MQKIETFWYF…DEMAQGHFNE (74 aa). Residues 74–122 are domain II; it reads EKIHFKLELKDPAEIKTATIKAPEPKSKEDKKPPTDKAHGTTARKTNPS. A disordered region spans residues 91–123; sequence ATIKAPEPKSKEDKKPPTDKAHGTTARKTNPSR. Over residues 96–112 the composition is skewed to basic and acidic residues; it reads PEPKSKEDKKPPTDKAH. The interval 123 to 339 is domain III, AAA+ region; it reads RLNPAFTFDA…GALKRVLAYS (217 aa). Residues glycine 167, glycine 169, lysine 170, and threonine 171 each contribute to the ATP site. The domain IV, binds dsDNA stretch occupies residues 340 to 459; sequence RFTGHPISLD…YSTLIHILRG (120 aa).

It belongs to the DnaA family. In terms of assembly, oligomerizes as a right-handed, spiral filament on DNA at oriC.

The protein resides in the cytoplasm. Functionally, plays an essential role in the initiation and regulation of chromosomal replication. ATP-DnaA binds to the origin of replication (oriC) to initiate formation of the DNA replication initiation complex once per cell cycle. Binds the DnaA box (a 9 base pair repeat at the origin) and separates the double-stranded (ds)DNA. Forms a right-handed helical filament on oriC DNA; dsDNA binds to the exterior of the filament while single-stranded (ss)DNA is stabiized in the filament's interior. The ATP-DnaA-oriC complex binds and stabilizes one strand of the AT-rich DNA unwinding element (DUE), permitting loading of DNA polymerase. After initiation quickly degrades to an ADP-DnaA complex that is not apt for DNA replication. Binds acidic phospholipids. The protein is Chromosomal replication initiator protein DnaA of Nitrosomonas eutropha (strain DSM 101675 / C91 / Nm57).